Here is a 45-residue protein sequence, read N- to C-terminus: Mu-conotoxin-like Cal 12.1.2g (45 aa).

4 disulfides stabilise this stretch: Cys3-Cys16, Cys11-Cys28, Cys18-Cys33, and Cys27-Cys39. 4-hydroxyproline is present on Pro23. 2 positions are modified to 6'-bromotryptophan: Trp37 and Trp38. The residue at position 40 (Pro40) is a 4-hydroxyproline.

As to expression, expressed by the venom duct.

The protein resides in the secreted. Its function is as follows. Mu-conotoxins block voltage-gated sodium channels. This toxin reversibly blocks voltage-gated sodium channel in cephalopods, with no alteration in the voltage dependence of sodium conductance or on the kinetics of inactivation. In Californiconus californicus (California cone), this protein is Mu-conotoxin-like Cal 12.1.2g.